We begin with the raw amino-acid sequence, 330 residues long: Ketol-acid reductoisomerase (NADP(+)) (330 aa).

One can recognise a KARI N-terminal Rossmann domain in the interval 2 to 182 (ARLYYDTDAN…GGTRAGILET (181 aa)). NADP(+) is bound by residues 25–28 (YGSQ), S51, S53, and 83–86 (DEVQ). H108 is an active-site residue. G134 contacts NADP(+). The KARI C-terminal knotted domain occupies 183–328 (TFREETETDL…RELRAMFSWL (146 aa)). Mg(2+) is bound by residues D191, E195, E227, and E231. S252 is a binding site for substrate.

Belongs to the ketol-acid reductoisomerase family. Requires Mg(2+) as cofactor.

It carries out the reaction (2R)-2,3-dihydroxy-3-methylbutanoate + NADP(+) = (2S)-2-acetolactate + NADPH + H(+). It catalyses the reaction (2R,3R)-2,3-dihydroxy-3-methylpentanoate + NADP(+) = (S)-2-ethyl-2-hydroxy-3-oxobutanoate + NADPH + H(+). The protein operates within amino-acid biosynthesis; L-isoleucine biosynthesis; L-isoleucine from 2-oxobutanoate: step 2/4. It functions in the pathway amino-acid biosynthesis; L-valine biosynthesis; L-valine from pyruvate: step 2/4. Functionally, involved in the biosynthesis of branched-chain amino acids (BCAA). Catalyzes an alkyl-migration followed by a ketol-acid reduction of (S)-2-acetolactate (S2AL) to yield (R)-2,3-dihydroxy-isovalerate. In the isomerase reaction, S2AL is rearranged via a Mg-dependent methyl migration to produce 3-hydroxy-3-methyl-2-ketobutyrate (HMKB). In the reductase reaction, this 2-ketoacid undergoes a metal-dependent reduction by NADPH to yield (R)-2,3-dihydroxy-isovalerate. The chain is Ketol-acid reductoisomerase (NADP(+)) from Synechococcus sp. (strain JA-2-3B'a(2-13)) (Cyanobacteria bacterium Yellowstone B-Prime).